A 77-amino-acid polypeptide reads, in one-letter code: Small ribosomal subunit protein bS18 (77 aa).

The protein belongs to the bacterial ribosomal protein bS18 family. Part of the 30S ribosomal subunit. Forms a tight heterodimer with protein bS6.

Binds as a heterodimer with protein bS6 to the central domain of the 16S rRNA, where it helps stabilize the platform of the 30S subunit. This Shouchella clausii (strain KSM-K16) (Alkalihalobacillus clausii) protein is Small ribosomal subunit protein bS18.